The following is a 459-amino-acid chain: V-type ATP synthase beta chain (459 aa).

The protein belongs to the ATPase alpha/beta chains family.

Functionally, produces ATP from ADP in the presence of a proton gradient across the membrane. The V-type beta chain is a regulatory subunit. This is V-type ATP synthase beta chain from Thermoanaerobacter pseudethanolicus (strain ATCC 33223 / 39E) (Clostridium thermohydrosulfuricum).